The primary structure comprises 234 residues: Protein rgg8 (234 aa).

Its subcellular location is the cytoplasm. The protein resides in the nucleus. The polypeptide is Protein rgg8 (rgg8) (Schizosaccharomyces pombe (strain 972 / ATCC 24843) (Fission yeast)).